The following is a 487-amino-acid chain: MSLKVYNTLTGKKEEFVPIKPGEVKIYTCGVTVYDVNHVGHGRSLIVFDVIRRYLRYLGYNVYFVRNFTDVDDKIINRAKNECLPFTVIADRYIKEYFQDAENFRIEPADVEPRVTTHIPDIIDFIQRLIDKGYAYEVEGDVYFSVRKFKEYGKLSKRSVDELIAGARVEPGEKKRDPLDFALWKASKAGEPAWDSPWGKGRPGWHTECCAMIFKHLGETIDIHGGGLDLTFPHHENELAQAEALSDKPFARYWIHNGLVTVNGQKMSKSLGNYITLKEIYSKYDPDVLRLLVLSVHYRSPLDFSWEKMEETKKAYERLKGAIDEYEILKKLPENPDFDEHLYDEIAKAEQGFYAAMSDDFNTPEALASLFTLVREMNILRDKAVKSGGISKKALESYKEASDVLHSIGKEIFGLFDSLQPCIEVEEIKVEKAEEKIDTQLVEALIEVRNKARKEKQFEIADYIREKLSQLGIVIEDTPVGTKWKKK.

C29 contacts Zn(2+). The 'HIGH' region signature appears at 31–41; it reads VTVYDVNHVGH. 3 residues coordinate Zn(2+): C209, H234, and E238. The 'KMSKS' region motif lies at 266 to 270; it reads KMSKS. Residue K269 coordinates ATP.

It belongs to the class-I aminoacyl-tRNA synthetase family. Monomer. Requires Zn(2+) as cofactor.

The protein resides in the cytoplasm. It catalyses the reaction tRNA(Cys) + L-cysteine + ATP = L-cysteinyl-tRNA(Cys) + AMP + diphosphate. The chain is Cysteine--tRNA ligase from Persephonella marina (strain DSM 14350 / EX-H1).